The primary structure comprises 315 residues: Olfactory receptor 3A10 (315 aa).

Residues Met-1 to Pro-28 lie on the Extracellular side of the membrane. Asn-8 is a glycosylation site (N-linked (GlcNAc...) asparagine). A helical transmembrane segment spans residues Ile-29–Leu-49. Residues Ala-50–Asn-68 are Cytoplasmic-facing. A helical membrane pass occupies residues Leu-69 to Leu-89. Residues Ala-90–Tyr-97 lie on the Extracellular side of the membrane. Residues Ala-98–Leu-118 form a helical membrane-spanning segment. Cysteines 100 and 192 form a disulfide. Residues Thr-119–Gly-145 lie on the Cytoplasmic side of the membrane. Residues Thr-146–Val-166 traverse the membrane as a helical segment. Topologically, residues Ser-167 to Gln-200 are extracellular. The chain crosses the membrane as a helical span at residues Leu-201 to Tyr-221. At Ala-222 to Lys-239 the chain is on the cytoplasmic side. The helical transmembrane segment at Ala-240–Phe-260 threads the bilayer. The Extracellular segment spans residues Ser-261–Asp-274. The helical transmembrane segment at Lys-275–Leu-295 threads the bilayer. The Cytoplasmic portion of the chain corresponds to Arg-296–Val-315.

Belongs to the G-protein coupled receptor 1 family.

Its subcellular location is the cell membrane. Functionally, odorant receptor. This is Olfactory receptor 3A10 from Mus musculus (Mouse).